We begin with the raw amino-acid sequence, 257 residues long: NAD-capped RNA hydrolase NudC (257 aa).

Residue arginine 69 coordinates substrate. Zn(2+) is bound by residues cysteine 98 and cysteine 101. Glutamate 111 provides a ligand contact to substrate. Residues cysteine 116 and cysteine 119 each coordinate Zn(2+). A substrate-binding site is contributed by tyrosine 124. Residues 125 to 248 enclose the Nudix hydrolase domain; the sequence is PQIAPCIIVA…TVARRLIEDT (124 aa). The a divalent metal cation site is built by alanine 158, glutamate 174, and glutamate 178. The Nudix box motif lies at 159-180; that stretch reads GFVEVGETLEQAVAREVMEESG. Residue 192-199 participates in substrate binding; sequence QPWPFPQS. Glutamate 219 lines the a divalent metal cation pocket. Position 241 (alanine 241) interacts with substrate.

Belongs to the Nudix hydrolase family. NudC subfamily. In terms of assembly, homodimer. The cofactor is Mg(2+). Mn(2+) serves as cofactor. Requires Zn(2+) as cofactor.

The enzyme catalyses a 5'-end NAD(+)-phospho-ribonucleoside in mRNA + H2O = a 5'-end phospho-adenosine-phospho-ribonucleoside in mRNA + beta-nicotinamide D-ribonucleotide + 2 H(+). It carries out the reaction NAD(+) + H2O = beta-nicotinamide D-ribonucleotide + AMP + 2 H(+). The catalysed reaction is NADH + H2O = reduced beta-nicotinamide D-ribonucleotide + AMP + 2 H(+). In terms of biological role, mRNA decapping enzyme that specifically removes the nicotinamide adenine dinucleotide (NAD) cap from a subset of mRNAs by hydrolyzing the diphosphate linkage to produce nicotinamide mononucleotide (NMN) and 5' monophosphate mRNA. The NAD-cap is present at the 5'-end of some mRNAs and stabilizes RNA against 5'-processing. Has preference for mRNAs with a 5'-end purine. Catalyzes the hydrolysis of a broad range of dinucleotide pyrophosphates. The polypeptide is NAD-capped RNA hydrolase NudC (Salmonella choleraesuis (strain SC-B67)).